Here is a 301-residue protein sequence, read N- to C-terminus: Acetylglutamate kinase (301 aa).

Substrate-binding positions include 71 to 72 (GG), Arg93, and Asn198.

Belongs to the acetylglutamate kinase family. ArgB subfamily.

It is found in the cytoplasm. The enzyme catalyses N-acetyl-L-glutamate + ATP = N-acetyl-L-glutamyl 5-phosphate + ADP. It functions in the pathway amino-acid biosynthesis; L-arginine biosynthesis; N(2)-acetyl-L-ornithine from L-glutamate: step 2/4. In terms of biological role, catalyzes the ATP-dependent phosphorylation of N-acetyl-L-glutamate. The sequence is that of Acetylglutamate kinase from Zymomonas mobilis subsp. mobilis (strain ATCC 31821 / ZM4 / CP4).